Reading from the N-terminus, the 154-residue chain is Ribosomal RNA large subunit methyltransferase H (154 aa).

Residues Leu-70, Gly-102, and 121 to 126 (LSRLTF) each bind S-adenosyl-L-methionine.

The protein belongs to the RNA methyltransferase RlmH family. In terms of assembly, homodimer.

Its subcellular location is the cytoplasm. It catalyses the reaction pseudouridine(1915) in 23S rRNA + S-adenosyl-L-methionine = N(3)-methylpseudouridine(1915) in 23S rRNA + S-adenosyl-L-homocysteine + H(+). Its function is as follows. Specifically methylates the pseudouridine at position 1915 (m3Psi1915) in 23S rRNA. The chain is Ribosomal RNA large subunit methyltransferase H from Geobacter metallireducens (strain ATCC 53774 / DSM 7210 / GS-15).